The sequence spans 1194 residues: Immunoglobulin superfamily member 3 (1194 aa).

Positions 1–19 (MKCFFPVLSCLAVLGVVSA) are cleaved as a signal peptide. 8 consecutive Ig-like C2-type domains span residues 20–138 (QRQV…AKMN), 143–262 (PDSL…WYAM), 276–386 (PTDK…KTVT), 401–539 (PIIV…ISIT), 545–661 (FAVT…WTRL), 676–803 (PVTK…EEVS), 813–945 (PDSR…TALT), and 949–1097 (PDAS…YRLT). The Extracellular portion of the chain corresponds to 20 to 1124 (QRQVTVQEGP…LQSIICSNDA (1105 aa)). 2 disulfides stabilise this stretch: Cys-42–Cys-120 and Cys-167–Cys-246. Residue Asn-43 is glycosylated (N-linked (GlcNAc...) asparagine). Residues 250-252 (EWI) carry the EWI motif motif. Cysteines 302 and 376 form a disulfide. The N-linked (GlcNAc...) asparagine glycan is linked to Asn-418. Intrachain disulfides connect Cys-432–Cys-511 and Cys-566–Cys-645. Asn-655 carries an N-linked (GlcNAc...) asparagine glycan. 3 disulfide bridges follow: Cys-701/Cys-782, Cys-838/Cys-918, and Cys-974/Cys-1080. Asn-842 carries N-linked (GlcNAc...) asparagine glycosylation. Positions 997-1033 (AGGKRSSPGLEEQEEEREEEEEEDDDDDDDPTERTAL) are disordered. The segment covering 1007-1027 (EEQEEEREEEEEEDDDDDDDP) has biased composition (acidic residues). Residue Asn-1077 is glycosylated (N-linked (GlcNAc...) asparagine). Residues 1125–1145 (LFYFVFFYPFPIFGILIITIL) form a helical membrane-spanning segment. Over 1146–1194 (LVRFKSRNSSKNSDGKNGVPLLWIKEPHLNYSPTCLEPPVLSIHPGAID) the chain is Cytoplasmic.

Expressed in a wide range of tissues with High expression in Placenta, kidney and lung.

Its subcellular location is the membrane. This is Immunoglobulin superfamily member 3 (IGSF3) from Homo sapiens (Human).